Consider the following 301-residue polypeptide: Ornithine carbamoyltransferase (301 aa).

Residues Arg100 and 127–130 (HPCQ) contribute to the carbamoyl phosphate site. L-ornithine is bound by residues Asn158, Asp221, and 225–226 (SM). 2 residues coordinate carbamoyl phosphate: Cys260 and Arg288.

The protein belongs to the aspartate/ornithine carbamoyltransferase superfamily. OTCase family. In terms of assembly, the enzyme is present as a mixture of trimers and dodecamers, with the relative proportions of the two forms depending on the salt concentration. In addition, the trimeric fraction could reassociate into dodecamers when the salt concentration is increased. It appears that in vivo, the main fraction is in the dodecameric form.

It localises to the cytoplasm. It carries out the reaction carbamoyl phosphate + L-ornithine = L-citrulline + phosphate + H(+). Its pathway is amino-acid biosynthesis; L-arginine biosynthesis; L-arginine from L-ornithine and carbamoyl phosphate: step 1/3. Its activity is regulated as follows. Inhibited by excess of arginine and by the bisubstrate delta-N-phosphonoacetyl-L-ornithine (PALO). Functionally, reversibly catalyzes the transfer of the carbamoyl group from carbamoyl phosphate (CP) to the N(epsilon) atom of ornithine (ORN) to produce L-citrulline, which is a substrate for argininosuccinate synthetase, the enzyme involved in the final step in arginine biosynthesis. This Moritella abyssi protein is Ornithine carbamoyltransferase.